Here is a 348-residue protein sequence, read N- to C-terminus: Putative S-adenosyl-L-methionine-dependent methyltransferase MRA_3439 (348 aa).

Residues Asp171 and 200-201 contribute to the S-adenosyl-L-methionine site; that span reads DL.

It belongs to the UPF0677 family.

Exhibits S-adenosyl-L-methionine-dependent methyltransferase activity. This is Putative S-adenosyl-L-methionine-dependent methyltransferase MRA_3439 from Mycobacterium tuberculosis (strain ATCC 25177 / H37Ra).